The primary structure comprises 355 residues: Alanine racemase (355 aa).

The Proton acceptor; specific for D-alanine role is filled by Lys34. Lys34 bears the N6-(pyridoxal phosphate)lysine mark. Position 133 (Arg133) interacts with substrate. Residue Tyr249 is the Proton acceptor; specific for L-alanine of the active site. Position 297 (Met297) interacts with substrate.

The protein belongs to the alanine racemase family. It depends on pyridoxal 5'-phosphate as a cofactor.

The enzyme catalyses L-alanine = D-alanine. It functions in the pathway amino-acid biosynthesis; D-alanine biosynthesis; D-alanine from L-alanine: step 1/1. Catalyzes the interconversion of L-alanine and D-alanine. May also act on other amino acids. The polypeptide is Alanine racemase (alr) (Rickettsia akari (strain Hartford)).